The primary structure comprises 250 residues: Mediator of RNA polymerase II transcription subunit 6 (250 aa).

Residues 166-250 are disordered; sequence KKREEEKKED…EPTARTTSKQ (85 aa). Residues 204–223 show a composition bias toward acidic residues; sequence PAEDALEREEKEEVEEEEEE. A compositionally biased stretch (basic and acidic residues) spans 224-239; sequence TLKTEEPTTSTDEPKF.

Belongs to the Mediator complex subunit 6 family. In terms of assembly, component of the Mediator complex. Interacts with let-19/mdt-13. Interacts with RNA polymerase II. Interacts with mdt-28.

It localises to the nucleus. Its function is as follows. Component of the Mediator complex, a coactivator involved in the regulated transcription of nearly all RNA polymerase II-dependent genes. Mediator functions as a bridge to convey information from gene-specific regulatory proteins to the basal RNA polymerase II transcription machinery. Mediator is recruited to promoters by direct interactions with regulatory proteins and serves as a scaffold for the assembly of a functional preinitiation complex with RNA polymerase II and the general transcription factors. Acts to repress beta-catenin target genes. Required for asymmetric division of T-cells and for gonad and germ cell development. The protein is Mediator of RNA polymerase II transcription subunit 6 (mdt-6) of Caenorhabditis elegans.